Reading from the N-terminus, the 141-residue chain is Nucleoside diphosphate kinase (141 aa).

The ATP site is built by lysine 11, phenylalanine 59, arginine 87, threonine 93, arginine 104, and asparagine 114. Histidine 117 acts as the Pros-phosphohistidine intermediate in catalysis.

The protein belongs to the NDK family. In terms of assembly, homotetramer. Mg(2+) is required as a cofactor.

The protein localises to the cytoplasm. It catalyses the reaction a 2'-deoxyribonucleoside 5'-diphosphate + ATP = a 2'-deoxyribonucleoside 5'-triphosphate + ADP. The catalysed reaction is a ribonucleoside 5'-diphosphate + ATP = a ribonucleoside 5'-triphosphate + ADP. In terms of biological role, major role in the synthesis of nucleoside triphosphates other than ATP. The ATP gamma phosphate is transferred to the NDP beta phosphate via a ping-pong mechanism, using a phosphorylated active-site intermediate. The chain is Nucleoside diphosphate kinase from Hamiltonella defensa subsp. Acyrthosiphon pisum (strain 5AT).